The following is a 311-amino-acid chain: Eukaryotic translation initiation factor 3 subunit E (311 aa).

In terms of domain architecture, PCI spans 100–280; it reads VYYNYPKGRD…MGVKSVSIHE (181 aa).

The protein belongs to the eIF-3 subunit E family. As to quaternary structure, component of the eukaryotic translation initiation factor 3 (eIF-3) complex.

The protein resides in the cytoplasm. Functionally, component of the eukaryotic translation initiation factor 3 (eIF-3) complex, which is involved in protein synthesis of a specialized repertoire of mRNAs and, together with other initiation factors, stimulates binding of mRNA and methionyl-tRNAi to the 40S ribosome. The eIF-3 complex specifically targets and initiates translation of a subset of mRNAs involved in cell proliferation. The chain is Eukaryotic translation initiation factor 3 subunit E from Caenorhabditis briggsae.